Consider the following 373-residue polypeptide: 4-hydroxy-3-methylbut-2-en-1-yl diphosphate synthase (flavodoxin) (373 aa).

Residues cysteine 270, cysteine 273, cysteine 305, and glutamate 312 each contribute to the [4Fe-4S] cluster site.

Belongs to the IspG family. Requires [4Fe-4S] cluster as cofactor.

It catalyses the reaction (2E)-4-hydroxy-3-methylbut-2-enyl diphosphate + oxidized [flavodoxin] + H2O + 2 H(+) = 2-C-methyl-D-erythritol 2,4-cyclic diphosphate + reduced [flavodoxin]. It participates in isoprenoid biosynthesis; isopentenyl diphosphate biosynthesis via DXP pathway; isopentenyl diphosphate from 1-deoxy-D-xylulose 5-phosphate: step 5/6. Its function is as follows. Converts 2C-methyl-D-erythritol 2,4-cyclodiphosphate (ME-2,4cPP) into 1-hydroxy-2-methyl-2-(E)-butenyl 4-diphosphate. In Sodalis glossinidius (strain morsitans), this protein is 4-hydroxy-3-methylbut-2-en-1-yl diphosphate synthase (flavodoxin).